We begin with the raw amino-acid sequence, 491 residues long: Equilibrative nucleobase transporter 1 (491 aa).

A helical membrane pass occupies residues 17-37; that stretch reads LLECLGFAGVLFGWPSLVFVF. An N-linked (GlcNAc...) asparagine glycan is attached at Asn56. Helical transmembrane passes span 72 to 92, 102 to 122, 123 to 143, 156 to 176, and 188 to 208; these read LIFTLGSFMNNFMTFPTGYIF, LIAIFFYTTATLIIAFTSAGS, AVLLFLAMPMLTIGGILFLIT, STIITLYNGAFDSSSAVFLII, and ASFIFISVCSTWHVARTFLLM. Asn220 and Asn229 each carry an N-linked (GlcNAc...) asparagine glycan. Ser253 is modified (phosphoserine). The residue at position 258 (Thr258) is a Phosphothreonine. A run of 6 helical transmembrane segments spans residues 279–299, 319–339, 356–376, 396–418, 427–447, and 456–476; these read FAWHLVWLSVIQLWHYLFIGT, TNAFAFTQFGVLCAPWNGLLM, STLAVALCSTVPSLALTSLLC, ILQVISRSFLYGSNAAFLTLAFP, GLVMALSAVVSLLQFPIFTLI, and FYVNVMFMLAILLTFFHPFLV.

It belongs to the SLC43A transporter (TC 2.A.1.44) family. As to expression, widely expressed with highest levels in the liver and lung, followed by the pancreas. Highly expressed in macrophages.

Its subcellular location is the basolateral cell membrane. It carries out the reaction adenine(out) = adenine(in). It catalyses the reaction guanine(out) = guanine(in). The enzyme catalyses hypoxanthine(out) = hypoxanthine(in). Its activity is regulated as follows. Adenine transport is strongly inhibited by decynium-22. With respect to regulation, 6-mercaptopurine-transport is inhibited by 6-thioguanine, 6-methylmercaptopurine and decynium-22. In terms of biological role, sodium-independent purine-selective nucleobase transporter which mediates the equilibrative transport of extracellular purine nucleobases such as adenine, guanine and hypoxanthine. May regulate fatty acid (FA) transport in adipocytes, acting as a positive regulator of FA efflux and as a negative regulator of FA uptake. Functionally, sodium-independent purine-selective nucleobase transporter which mediates the equilibrative transport of extracellular purine nucleobase adenine. Mediates the influx and efflux of the purine nucleobase analog drug 6-mercaptopurine across the membrane. This chain is Equilibrative nucleobase transporter 1 (SLC43A3), found in Homo sapiens (Human).